Consider the following 419-residue polypeptide: Gamma-glutamyl phosphate reductase (419 aa).

This sequence belongs to the gamma-glutamyl phosphate reductase family.

It localises to the cytoplasm. The enzyme catalyses L-glutamate 5-semialdehyde + phosphate + NADP(+) = L-glutamyl 5-phosphate + NADPH + H(+). Its pathway is amino-acid biosynthesis; L-proline biosynthesis; L-glutamate 5-semialdehyde from L-glutamate: step 2/2. Its function is as follows. Catalyzes the NADPH-dependent reduction of L-glutamate 5-phosphate into L-glutamate 5-semialdehyde and phosphate. The product spontaneously undergoes cyclization to form 1-pyrroline-5-carboxylate. The chain is Gamma-glutamyl phosphate reductase from Oleidesulfovibrio alaskensis (strain ATCC BAA-1058 / DSM 17464 / G20) (Desulfovibrio alaskensis).